Consider the following 600-residue polypeptide: DNA ligase (600 aa).

Residue aspartate 259 coordinates ATP. Catalysis depends on lysine 261, which acts as the N6-AMP-lysine intermediate. Residues arginine 266, arginine 281, glutamate 311, phenylalanine 351, arginine 428, and lysine 434 each coordinate ATP.

It belongs to the ATP-dependent DNA ligase family. Mg(2+) is required as a cofactor.

The catalysed reaction is ATP + (deoxyribonucleotide)n-3'-hydroxyl + 5'-phospho-(deoxyribonucleotide)m = (deoxyribonucleotide)n+m + AMP + diphosphate.. DNA ligase that seals nicks in double-stranded DNA during DNA replication, DNA recombination and DNA repair. This Acidianus ambivalens (Desulfurolobus ambivalens) protein is DNA ligase.